Reading from the N-terminus, the 126-residue chain is Small ribosomal subunit protein uS12 (126 aa).

Over residues 1-16 (MPTVNQLVRQGRTMNK) the composition is skewed to polar residues. A disordered region spans residues 1–24 (MPTVNQLVRQGRTMNKTKTKSPAL). Aspartate 89 is modified (3-methylthioaspartic acid).

The protein belongs to the universal ribosomal protein uS12 family. In terms of assembly, part of the 30S ribosomal subunit. Contacts proteins S8 and S17. May interact with IF1 in the 30S initiation complex.

In terms of biological role, with S4 and S5 plays an important role in translational accuracy. Interacts with and stabilizes bases of the 16S rRNA that are involved in tRNA selection in the A site and with the mRNA backbone. Located at the interface of the 30S and 50S subunits, it traverses the body of the 30S subunit contacting proteins on the other side and probably holding the rRNA structure together. The combined cluster of proteins S8, S12 and S17 appears to hold together the shoulder and platform of the 30S subunit. The sequence is that of Small ribosomal subunit protein uS12 from Elusimicrobium minutum (strain Pei191).